The sequence spans 164 residues: Transcription antitermination protein NusB (164 aa).

Belongs to the NusB family.

Functionally, involved in transcription antitermination. Required for transcription of ribosomal RNA (rRNA) genes. Binds specifically to the boxA antiterminator sequence of the ribosomal RNA (rrn) operons. This is Transcription antitermination protein NusB from Chlamydia muridarum (strain MoPn / Nigg).